Here is a 117-residue protein sequence, read N- to C-terminus: Small ribosomal subunit protein bS6 (117 aa).

A disordered region spans residues 96–117 (HAEGPSVQMQKRDERDSRRERR). The span at 105–117 (QKRDERDSRRERR) shows a compositional bias: basic and acidic residues.

It belongs to the bacterial ribosomal protein bS6 family.

In terms of biological role, binds together with bS18 to 16S ribosomal RNA. The polypeptide is Small ribosomal subunit protein bS6 (Ruegeria pomeroyi (strain ATCC 700808 / DSM 15171 / DSS-3) (Silicibacter pomeroyi)).